The primary structure comprises 315 residues: MQQFLTLGALWTLFNVATTISLPKYSSSQTYFAQSDPNIPVSQVDDTNNFGLKSQYSWDDVVSNLASNEKLFFLQRHGQGWHNVAPSNFSRVDWNCYWAEQSGRDGVVWEDAELTPKGVQQIQNLHQRIKDTPDFPQPEKFFVSPLRRTLQTWNITWNGLPHKTPLIKEFAREIYGIDSESKRHNKTFIHNYVPSFEFESGFTEQDENWSPDKSESDQHCDYRAAVLLQDIFNDSPDEKVISVVLHSGIIYCLLDVVGHRYFPMATGGAIPVVIAIENYNTDYPLNDAWDTFKDWCPNPPASISGTATSTATGSA.

The first 19 residues, methionine 1–threonine 19, serve as a signal peptide directing secretion. The active-site Tele-phosphohistidine intermediate is the histidine 77. Residues asparagine 88 and asparagine 154 are each glycosylated (N-linked (GlcNAc...) asparagine). Glutamate 173 (proton donor/acceptor) is an active-site residue. Asparagine 185 carries N-linked (GlcNAc...) asparagine glycosylation. Residue asparagine 286 is the site of GPI-anchor amidated asparagine attachment. A propeptide spans aspartate 287 to alanine 315 (removed in mature form).

Belongs to the phosphoglycerate mutase family.

It localises to the cell membrane. The protein is Phosphomutase-like protein 3 (PGA12) of Candida albicans (strain SC5314 / ATCC MYA-2876) (Yeast).